The primary structure comprises 285 residues: Bifunctional protein FolD (285 aa).

NADP(+) is bound by residues G165–S167, S190, and I231.

This sequence belongs to the tetrahydrofolate dehydrogenase/cyclohydrolase family. As to quaternary structure, homodimer.

The enzyme catalyses (6R)-5,10-methylene-5,6,7,8-tetrahydrofolate + NADP(+) = (6R)-5,10-methenyltetrahydrofolate + NADPH. It carries out the reaction (6R)-5,10-methenyltetrahydrofolate + H2O = (6R)-10-formyltetrahydrofolate + H(+). The protein operates within one-carbon metabolism; tetrahydrofolate interconversion. Its function is as follows. Catalyzes the oxidation of 5,10-methylenetetrahydrofolate to 5,10-methenyltetrahydrofolate and then the hydrolysis of 5,10-methenyltetrahydrofolate to 10-formyltetrahydrofolate. The polypeptide is Bifunctional protein FolD (Acetivibrio thermocellus (strain ATCC 27405 / DSM 1237 / JCM 9322 / NBRC 103400 / NCIMB 10682 / NRRL B-4536 / VPI 7372) (Clostridium thermocellum)).